A 108-amino-acid chain; its full sequence is Cell cycle protein GpsB (108 aa).

A coiled-coil region spans residues 32–69 (LDNVIKDYENFNAQIEALKAENEALKKAKYQARNTVSA).

Belongs to the GpsB family. In terms of assembly, forms polymers through the coiled coil domains. Interacts with PBP1, MreC and EzrA.

The protein resides in the cytoplasm. Its function is as follows. Divisome component that associates with the complex late in its assembly, after the Z-ring is formed, and is dependent on DivIC and PBP2B for its recruitment to the divisome. Together with EzrA, is a key component of the system that regulates PBP1 localization during cell cycle progression. Its main role could be the removal of PBP1 from the cell pole after pole maturation is completed. Also contributes to the recruitment of PBP1 to the division complex. Not essential for septum formation. This Streptococcus pyogenes serotype M49 (strain NZ131) protein is Cell cycle protein GpsB.